The chain runs to 274 residues: Small ribosomal subunit biogenesis GTPase RsgA (274 aa).

The CP-type G domain occupies 58–215; sequence KNYLNRPKVA…LVDSPGFSIY (158 aa). Residues 108–111 and 158–166 contribute to the GTP site; these read SKLD and GHSGVGKST. Zn(2+)-binding residues include C238, C243, H245, and C252.

It belongs to the TRAFAC class YlqF/YawG GTPase family. RsgA subfamily. Monomer. Associates with 30S ribosomal subunit, binds 16S rRNA. Requires Zn(2+) as cofactor.

The protein localises to the cytoplasm. In terms of biological role, one of several proteins that assist in the late maturation steps of the functional core of the 30S ribosomal subunit. Helps release RbfA from mature subunits. May play a role in the assembly of ribosomal proteins into the subunit. Circularly permuted GTPase that catalyzes slow GTP hydrolysis, GTPase activity is stimulated by the 30S ribosomal subunit. This chain is Small ribosomal subunit biogenesis GTPase RsgA, found in Mycoplasmoides gallisepticum (strain R(low / passage 15 / clone 2)) (Mycoplasma gallisepticum).